Here is a 327-residue protein sequence, read N- to C-terminus: Taste receptor type 2 member 102 (327 aa).

The Extracellular segment spans residues M1–S7. Residues F8–V28 traverse the membrane as a helical segment. Residues L29–K46 lie on the Cytoplasmic side of the membrane. Residues I47 to T67 traverse the membrane as a helical segment. Residues S68–T87 are Extracellular-facing. A helical membrane pass occupies residues W88–L108. At R109 to R124 the chain is on the cytoplasmic side. Residues L125–T145 traverse the membrane as a helical segment. Topologically, residues Q146–N179 are extracellular. 2 N-linked (GlcNAc...) asparagine glycosylation sites follow: N159 and N179. Residues L180–F200 form a helical membrane-spanning segment. Topologically, residues S201–R229 are cytoplasmic. The helical transmembrane segment at I230–I250 threads the bilayer. At A251–D260 the chain is on the extracellular side. The helical transmembrane segment at I261–G281 threads the bilayer. Over N282–S327 the chain is Cytoplasmic.

This sequence belongs to the G-protein coupled receptor T2R family.

It is found in the membrane. Its function is as follows. Putative taste receptor which may play a role in the perception of bitterness. The polypeptide is Taste receptor type 2 member 102 (Rattus norvegicus (Rat)).